Reading from the N-terminus, the 501-residue chain is Serine/threonine-protein kinase pelle (501 aa).

Residues 1-25 (MSGVQTAEAEAQAQNQANGNRTRSR) form a disordered region. Positions 7–18 (AEAEAQAQNQAN) are enriched in low complexity. One can recognise a Death domain in the interval 55-121 (WQQLATAVKL…NAMRLIKDYV (67 aa)). The interval 144–176 (DSSAKVNNGPPFPSSSGVSNSNNNRTSTTATEE) is disordered. Residues 149–167 (VNNGPPFPSSSGVSNSNNN) are compositionally biased toward low complexity. In terms of domain architecture, Protein kinase spans 213 to 499 (WSPDNRLGQG…AVLKRFEPFV (287 aa)). Residues 219–227 (LGQGGFGDV) and Lys240 contribute to the ATP site. The active-site Proton acceptor is Asp346. ATP contacts are provided by residues 348-351 (KPAN) and Asp364.

This sequence belongs to the protein kinase superfamily. TKL Ser/Thr protein kinase family. Pelle subfamily. As to quaternary structure, interacts (via Death domain) with tub (via Death domain). Interacts with Pellino (Pli).

The protein localises to the cell membrane. It localises to the cytoplasm. The enzyme catalyses L-seryl-[protein] + ATP = O-phospho-L-seryl-[protein] + ADP + H(+). It catalyses the reaction L-threonyl-[protein] + ATP = O-phospho-L-threonyl-[protein] + ADP + H(+). Functionally, plays an essential role in the Tl receptor signaling pathway that establishes embryonic dorsoventral polarity; the signal directs import of dl into ventral and ventrolateral nuclei, thereby establishing dorsoventral polarity. Tub recruits pll to the plasma membrane and protein-protein interaction activates pll. The chain is Serine/threonine-protein kinase pelle (pll) from Drosophila melanogaster (Fruit fly).